We begin with the raw amino-acid sequence, 481 residues long: UDP-N-acetylmuramoyl-L-alanyl-D-glutamate--L-lysine ligase (481 aa).

S42 is a UDP-N-acetyl-alpha-D-muramoyl-L-alanyl-D-glutamate binding site. Position 118–124 (G118–T124) interacts with ATP. UDP-N-acetyl-alpha-D-muramoyl-L-alanyl-D-glutamate is bound by residues Q158, T160–T161, S187, and R195. Residue K229 is modified to N6-carboxylysine. The L-lysine recognition motif signature appears at D404–N407.

This sequence belongs to the MurCDEF family. MurE subfamily. Post-translationally, carboxylation is probably crucial for Mg(2+) binding and, consequently, for the gamma-phosphate positioning of ATP.

It localises to the cytoplasm. It carries out the reaction UDP-N-acetyl-alpha-D-muramoyl-L-alanyl-D-glutamate + L-lysine + ATP = UDP-N-acetyl-alpha-D-muramoyl-L-alanyl-gamma-D-glutamyl-L-lysine + ADP + phosphate + H(+). It functions in the pathway cell wall biogenesis; peptidoglycan biosynthesis. Its function is as follows. Catalyzes the addition of L-lysine to the nucleotide precursor UDP-N-acetylmuramoyl-L-alanyl-D-glutamate (UMAG) in the biosynthesis of bacterial cell-wall peptidoglycan. This Streptococcus pyogenes serotype M18 (strain MGAS8232) protein is UDP-N-acetylmuramoyl-L-alanyl-D-glutamate--L-lysine ligase.